Reading from the N-terminus, the 404-residue chain is Omega-3 fatty acid desaturase, chloroplastic (404 aa).

A disordered region spans residues 28–50; sequence TVDSSSSPPIEEEPKTQRFDPGA. Residues 121–125 carry the Histidine box-1 motif; sequence HDCGH. Residues 157-161 carry the Histidine box-2 motif; it reads HRTHH. The Histidine box-3 signature appears at 324-328; that stretch reads HVIHH.

This sequence belongs to the fatty acid desaturase type 1 family.

Its subcellular location is the plastid. It is found in the chloroplast membrane. It functions in the pathway lipid metabolism; polyunsaturated fatty acid biosynthesis. In terms of biological role, chloroplast omega-3 fatty acid desaturase introduces the third double bond in the biosynthesis of 16:3 and 18:3 fatty acids, important constituents of plant membranes. It is thought to use ferredoxin as an electron donor and to act on fatty acids esterified to galactolipids, sulfolipids and phosphatidylglycerol. This is Omega-3 fatty acid desaturase, chloroplastic (FAD7) from Brassica napus (Rape).